Here is a 508-residue protein sequence, read N- to C-terminus: Pyruvate kinase, cytosolic isozyme (508 aa).

Arg-48 is a binding site for substrate. K(+)-binding residues include Asn-50, Ser-52, Asp-82, and Thr-83. Asn-50 to His-53 provides a ligand contact to ATP. Arg-89 and Lys-174 together coordinate ATP. A Mg(2+)-binding site is contributed by Glu-240. Substrate contacts are provided by Gly-263, Asp-264, and Thr-296. Asp-264 is a Mg(2+) binding site.

Belongs to the pyruvate kinase family. Homotetramer. It depends on Mg(2+) as a cofactor. Requires K(+) as cofactor.

The protein localises to the cytoplasm. It catalyses the reaction pyruvate + ATP = phosphoenolpyruvate + ADP + H(+). The protein operates within carbohydrate degradation; glycolysis; pyruvate from D-glyceraldehyde 3-phosphate: step 5/5. This chain is Pyruvate kinase, cytosolic isozyme, found in Nicotiana tabacum (Common tobacco).